Reading from the N-terminus, the 912-residue chain is MSAPPVLRPPSPLLPVAAAAAAAAAALVPGSGPGPAPFLAPVAAPVGGISFHLQIGLSREPVLLLQDSSGDYSLAHVREMACSIVDQKFPECGFYGMYDKILLFRHDPTSENILQLVKAASDIQEGDLIEVVLSASATFEDFQIRPHALFVHSYRAPAFCDHCGEMLWGLVRQGLKCEGCGLNYHKRCAFKIPNNCSGVRRRRLSNVSLTGVSTIRTSSAELSTSAPDEPLLQKSPSESFIGREKRSNSQSYIGRPIHLDKILMSKVKVPHTFVIHSYTRPTVCQYCKKLLKGLFRQGLQCKDCRFNCHKRCAPKVPNNCLGEVTINGDLLSPGAESDVVMEEGSDDNDSERNSGLMDDMEEAMVQDAEMAMAECQNDSGEMQDPDPDHEDANRTISPSTSNNIPLMRVVQSVKHTKRKSSTVMKEGWMVHYTSKDTLRKRHYWRLDSKCITLFQNDTGSRYYKEIPLSEILSLEPVKTSALIPNGANPHCFEITTANVVYYVGENVVNPSSPSPNNSVLTSGVGADVARMWEIAIQHALMPVIPKGSSVGTGTNLHRDISVSISVSNCQIQENVDISTVYQIFPDEVLGSGQFGIVYGGKHRKTGRDVAIKIIDKLRFPTKQESQLRNEVAILQNLHHPGVVNLECMFETPERVFVVMEKLHGDMLEMILSSEKGRLPEHITKFLITQILVALRHLHFKNIVHCDLKPENVLLASADPFPQVKLCDFGFARIIGEKSFRRSVVGTPAYLAPEVLRNKGYNRSLDMWSVGVIIYVSLSGTFPFNEDEDIHDQIQNAAFMYPPNPWKEISHEAIDLINNLLQVKMRKRYSVDKTLSHPWLQDYQTWLDLRELECKIGERYITHESDDLRWEKYAGEQGLQYPTHLINPSASHSDTPETEETEMKALGERVSIL.

A Phosphotyrosine modification is found at Y95. Residues 146–196 form a Phorbol-ester/DAG-type 1 zinc finger; sequence PHALFVHSYRAPAFCDHCGEMLWGLVRQGLKCEGCGLNYHKRCAFKIPNNC. S205, S208, S219, and S223 each carry phosphoserine. Residues 270-320 form a Phorbol-ester/DAG-type 2 zinc finger; that stretch reads PHTFVIHSYTRPTVCQYCKKLLKGLFRQGLQCKDCRFNCHKRCAPKVPNNC. The residue at position 345 (S345) is a Phosphoserine. A disordered region spans residues 377 to 402; that stretch reads NDSGEMQDPDPDHEDANRTISPSTSN. Phosphoserine; by MAPK13 is present on residues S397 and S401. The PH domain maps to 422–541; that stretch reads TVMKEGWMVH…WEIAIQHALM (120 aa). Position 432 is a phosphotyrosine (Y432). S448 is modified (phosphoserine). Y463 carries the phosphotyrosine; by ABL modification. Phosphoserine is present on S473. At Y502 the chain carries Phosphotyrosine. Position 548 is a phosphoserine (S548). The 257-residue stretch at 583-839 folds into the Protein kinase domain; that stretch reads IFPDEVLGSG…VDKTLSHPWL (257 aa). ATP contacts are provided by residues 589-597 and K612; that span reads LGSGQFGIV. The active-site Proton acceptor is D706. S738 is modified (phosphoserine; by PKC/PRKCD). S742 carries the phosphoserine; by autocatalysis and PKC/PRKCD modification. The residue at position 749 (Y749) is a Phosphotyrosine. A Phosphoserine; by autocatalysis modification is found at S910.

The protein belongs to the protein kinase superfamily. CAMK Ser/Thr protein kinase family. PKD subfamily. Interacts (via N-terminus) with ADAP1/CENTA1. Interacts with MAPK13. Interacts with DAPK1 in an oxidative stress-regulated manner. Interacts with USP28; the interaction induces phosphorylation of USP28 and activated KRAS-mediated stabilization of ZNF304. Interacts with AKAP13 (via C-terminal domain). Requires Mg(2+) as cofactor. Phosphorylated at Ser-397 and Ser-401 by MAPK13 during regulation of insulin secretion in pancreatic beta cells. Phosphorylated by DAPK1. Phosphorylated at Tyr-95 and by ABL at Tyr-463, which primes the kinase in response to oxidative stress, and promotes a second step activating phosphorylation at Ser-738/Ser-742 by PKRD. Phosphorylated on Ser-910 upon S.enterica infection in macrophages.

Its subcellular location is the cytoplasm. The protein resides in the cell membrane. It localises to the golgi apparatus. The protein localises to the trans-Golgi network. It carries out the reaction L-seryl-[protein] + ATP = O-phospho-L-seryl-[protein] + ADP + H(+). The catalysed reaction is L-threonyl-[protein] + ATP = O-phospho-L-threonyl-[protein] + ADP + H(+). Activated by DAG and phorbol esters. Phorbol-ester/DAG-type domain 1 binds DAG with high affinity and appears to play the dominant role in mediating translocation to the cell membrane and trans-Golgi network. Phorbol-ester/DAG-type domain 2 binds phorbol ester with higher affinity. Autophosphorylation of Ser-742 and phosphorylation of Ser-738 by PKC relieves auto-inhibition by the PH domain. Phosphorylation on Tyr-463 by the SRC-ABL1 pathway in response to oxidative stress, is also required for activation. Activated by DAPK1 under oxidative stress. Serine/threonine-protein kinase that converts transient diacylglycerol (DAG) signals into prolonged physiological effects downstream of PKC, and is involved in the regulation of MAPK8/JNK1 and Ras signaling, Golgi membrane integrity and trafficking, cell survival through NF-kappa-B activation, cell migration, cell differentiation by mediating HDAC7 nuclear export, cell proliferation via MAPK1/3 (ERK1/2) signaling, and plays a role in cardiac hypertrophy, VEGFA-induced angiogenesis, genotoxic-induced apoptosis and flagellin-stimulated inflammatory response. Phosphorylates the epidermal growth factor receptor (EGFR) on dual threonine residues, which leads to the suppression of epidermal growth factor (EGF)-induced MAPK8/JNK1 activation and subsequent JUN phosphorylation. Phosphorylates RIN1, inducing RIN1 binding to 14-3-3 proteins YWHAB, YWHAE and YWHAZ and increased competition with RAF1 for binding to GTP-bound form of Ras proteins (NRAS, HRAS and KRAS). Acts downstream of the heterotrimeric G-protein beta/gamma-subunit complex to maintain the structural integrity of the Golgi membranes, and is required for protein transport along the secretory pathway. In the trans-Golgi network (TGN), regulates the fission of transport vesicles that are on their way to the plasma membrane. May act by activating the lipid kinase phosphatidylinositol 4-kinase beta (PI4KB) at the TGN for the local synthesis of phosphorylated inositol lipids, which induces a sequential production of DAG, phosphatidic acid (PA) and lyso-PA (LPA) that are necessary for membrane fission and generation of specific transport carriers to the cell surface. Under oxidative stress, is phosphorylated at Tyr-463 via SRC-ABL1 and contributes to cell survival by activating IKK complex and subsequent nuclear translocation and activation of NFKB1. Involved in cell migration by regulating integrin alpha-5/beta-3 recycling and promoting its recruitment in newly forming focal adhesion. In osteoblast differentiation, mediates the bone morphogenetic protein 2 (BMP2)-induced nuclear export of HDAC7, which results in the inhibition of HDAC7 transcriptional repression of RUNX2. In neurons, plays an important role in neuronal polarity by regulating the biogenesis of TGN-derived dendritic vesicles, and is involved in the maintenance of dendritic arborization and Golgi structure in hippocampal cells. May potentiate mitogenesis induced by the neuropeptide bombesin or vasopressin by mediating an increase in the duration of MAPK1/3 (ERK1/2) signaling, which leads to accumulation of immediate-early gene products including FOS that stimulate cell cycle progression. Plays an important role in the proliferative response induced by low calcium in keratinocytes, through sustained activation of MAPK1/3 (ERK1/2) pathway. Downstream of novel PKC signaling, plays a role in cardiac hypertrophy by phosphorylating HDAC5, which in turn triggers XPO1/CRM1-dependent nuclear export of HDAC5, MEF2A transcriptional activation and induction of downstream target genes that promote myocyte hypertrophy and pathological cardiac remodeling. Mediates cardiac troponin I (TNNI3) phosphorylation at the PKA sites, which results in reduced myofilament calcium sensitivity, and accelerated crossbridge cycling kinetics. The PRKD1-HDAC5 pathway is also involved in angiogenesis by mediating VEGFA-induced specific subset of gene expression, cell migration, and tube formation. In response to VEGFA, is necessary and required for HDAC7 phosphorylation which induces HDAC7 nuclear export and endothelial cell proliferation and migration. During apoptosis induced by cytarabine and other genotoxic agents, PRKD1 is cleaved by caspase-3 at Asp-378, resulting in activation of its kinase function and increased sensitivity of cells to the cytotoxic effects of genotoxic agents. In epithelial cells, is required for transducing flagellin-stimulated inflammatory responses by binding and phosphorylating TLR5, which contributes to MAPK14/p38 activation and production of inflammatory cytokines. Acts as an activator of NLRP3 inflammasome assembly by mediating phosphorylation of NLRP3. May play a role in inflammatory response by mediating activation of NF-kappa-B. May be involved in pain transmission by directly modulating TRPV1 receptor. Plays a role in activated KRAS-mediated stabilization of ZNF304 in colorectal cancer (CRC) cells. Regulates nuclear translocation of transcription factor TFEB in macrophages upon live S.enterica infection. The chain is Serine/threonine-protein kinase D1 (PRKD1) from Homo sapiens (Human).